A 434-amino-acid polypeptide reads, in one-letter code: Monodehydroascorbate reductase 1, peroxisomal (434 aa).

FAD contacts are provided by residues G13 to S16, E40, R47, K52, I95, and R146 to E147. NAD(+) is bound by residues G171–E177, E195, R201, and G260. Y173 to E177 is a binding site for NADP(+). NADP(+) is bound by residues R201 and G260. D297 is a binding site for FAD. Position 313–314 (E313–H314) interacts with NAD(+). E313 to H314 is an NADP(+) binding site. Residue V315 coordinates FAD. Residue R319 coordinates L-ascorbate. Y348 is an FAD binding site. Y348 is an NAD(+) binding site. Position 348 (Y348) interacts with NADP(+). R350 serves as a coordination point for L-ascorbate. Position 416 is a phosphoserine (S416).

This sequence belongs to the FAD-dependent oxidoreductase family. Requires FAD as cofactor.

The protein resides in the peroxisome matrix. The enzyme catalyses 2 monodehydro-L-ascorbate radical + NADH + H(+) = 2 L-ascorbate + NAD(+). Functionally, catalyzes the conversion of monodehydroascorbate to ascorbate, oxidizing NADH in the process. In Arabidopsis thaliana (Mouse-ear cress), this protein is Monodehydroascorbate reductase 1, peroxisomal.